A 194-amino-acid polypeptide reads, in one-letter code: MDKFTVHTGTTLAIMNDNIDTDQLLPKQFLKRLTKKGYEDALFFEWRYKEDGSNNPDFILNDPERQDASILITGDSFGIGSSREHAVWALRDWGFKAVIAGSFGPILYMNCTKNGVLPIELPKEARETLSKLTPTEQVTIDLPKQEVICGEHSWHFDINSSWKEKFLTGEDDIDQTMRYKDQISAYEVQISPYQ.

It belongs to the LeuD family. LeuD type 1 subfamily. In terms of assembly, heterodimer of LeuC and LeuD.

The catalysed reaction is (2R,3S)-3-isopropylmalate = (2S)-2-isopropylmalate. It functions in the pathway amino-acid biosynthesis; L-leucine biosynthesis; L-leucine from 3-methyl-2-oxobutanoate: step 2/4. In terms of biological role, catalyzes the isomerization between 2-isopropylmalate and 3-isopropylmalate, via the formation of 2-isopropylmaleate. This is 3-isopropylmalate dehydratase small subunit from Limosilactobacillus fermentum (strain NBRC 3956 / LMG 18251) (Lactobacillus fermentum).